The sequence spans 351 residues: Translation initiation factor eIF2B subunit beta (351 aa).

It belongs to the eIF-2B alpha/beta/delta subunits family. Component of the translation initiation factor 2B (eIF2B) complex which is a heterodecamer of two sets of five different subunits: alpha, beta, gamma, delta and epsilon. Subunits alpha, beta and delta comprise a regulatory subcomplex and subunits epsilon and gamma comprise a catalytic subcomplex. Within the complex, the hexameric regulatory complex resides at the center, with the two heterodimeric catalytic subcomplexes bound on opposite sides.

The protein localises to the cytoplasm. Its subcellular location is the cytosol. Its activity is regulated as follows. Activated by the chemical integrated stress response (ISR) inhibitor ISRIB which stimulates guanine nucleotide exchange factor activity for both phosphorylated and unphosphorylated eIF2. Its function is as follows. Acts as a component of the translation initiation factor 2B (eIF2B) complex, which catalyzes the exchange of GDP for GTP on eukaryotic initiation factor 2 (eIF2) gamma subunit. Its guanine nucleotide exchange factor activity is repressed when bound to eIF2 complex phosphorylated on the alpha subunit, thereby limiting the amount of methionyl-initiator methionine tRNA available to the ribosome and consequently global translation is repressed. The chain is Translation initiation factor eIF2B subunit beta (EIF2B2) from Oryctolagus cuniculus (Rabbit).